Reading from the N-terminus, the 395-residue chain is Multidrug resistance protein MdtL (395 aa).

12 helical membrane-spanning segments follow: residues 4–24, 42–62, 69–89, 93–113, 131–151, 158–178, 217–237, 247–267, 271–291, 295–315, 333–353, and 358–378; these read FLLC…MYLV, IAFS…GKIA, PVAI…SRAS, LFLS…VVAF, LLNG…HLIM, SLFY…LFIL, VSVI…VMGF, ALTA…LGLF, TLML…SLAH, VTLF…GVAM, LGIA…ILGI, and MLIG…FSVA.

The protein belongs to the major facilitator superfamily. DHA1 family. MdtL (TC 2.A.1.2.22) subfamily.

It is found in the cell inner membrane. This chain is Multidrug resistance protein MdtL, found in Salmonella agona (strain SL483).